Reading from the N-terminus, the 177-residue chain is Apoptosis regulatory protein Siva (177 aa).

Tyr34 carries the phosphotyrosine; by ABL2 modification. An interaction with BCL2L1 isoform Bcl-x(L) and inhibition of BCL2L1 anti-apoptotic activity region spans residues 36 to 55 (REVFERTKQLLFQGAQAYRD).

Binds through its N-terminal region to the C-terminus of CD27 and to PXMP2/PMP22. Binds to the C-terminus of TNFRSF18/GITR. Binds to BCL2L1/BCLX isoform Bcl-x(L) but not to BAX. It depends on Zn(2+) as a cofactor. In terms of tissue distribution, in post-ischemic kidney, found in cells lining the S3 segment of proximal tubules at 12 hours and 1 day post-ischemia. At five and seven days post-ischemia, found in epithelial cells of papillary proliferations in regenerating tubules.

It is found in the cytoplasm. The protein localises to the nucleus. In terms of biological role, induces CD27-mediated apoptosis. Inhibits BCL2L1 isoform Bcl-x(L) anti-apoptotic activity. Inhibits activation of NF-kappa-B and promotes T-cell receptor-mediated apoptosis. The sequence is that of Apoptosis regulatory protein Siva (Siva1) from Rattus norvegicus (Rat).